A 176-amino-acid polypeptide reads, in one-letter code: CASP-like protein 5A1 (176 aa).

Over 1–35 (MNPSHPAVHPVEAPPTDVHHAPRVRMKDYQGMPGT) the chain is Cytoplasmic. The chain crosses the membrane as a helical span at residues 36 to 56 (LGGLALRLGQFCFAVVAFSIM). Topologically, residues 57 to 67 (LSTDDFSTVTA) are extracellular. The chain crosses the membrane as a helical span at residues 68–88 (FCYLVAATVLQCLWSLALAVI). At 89-102 (DGYALLVKRSLRNS) the chain is on the cytoplasmic side. The chain crosses the membrane as a helical span at residues 103-123 (LVVSLFVVGDGVTATLTFAAA). Residues 124 to 152 (CASAGITVLIGNDLRECDQNHCGKYETAT) are Extracellular-facing. A helical membrane pass occupies residues 153–173 (AMAFLSWFMVSPSFLLTFWLL). The Cytoplasmic portion of the chain corresponds to 174 to 176 (ASR).

It belongs to the Casparian strip membrane proteins (CASP) family. As to quaternary structure, homodimer and heterodimers.

Its subcellular location is the cell membrane. The chain is CASP-like protein 5A1 from Ginkgo biloba (Ginkgo).